Reading from the N-terminus, the 711-residue chain is Polyribonucleotide nucleotidyltransferase (711 aa).

Mg(2+)-binding residues include Asp486 and Asp492. The 60-residue stretch at 553-612 folds into the KH domain; that stretch reads PRIHTIKISTDKIKDVIGKGGSVIRALTEETGTTIEIEDDGTVKIAATDGEKAKYAIRRI. The region spanning 622–690 is the S1 motif domain; the sequence is GRIYNGKVTR…RQGRVRLSIK (69 aa). The interval 690–711 is disordered; it reads KEATEQSQPAAAPEAPASEQAE. Residues 694-711 are compositionally biased toward low complexity; the sequence is EQSQPAAAPEAPASEQAE.

The protein belongs to the polyribonucleotide nucleotidyltransferase family. In terms of assembly, component of the RNA degradosome, which is a multiprotein complex involved in RNA processing and mRNA degradation. Mg(2+) is required as a cofactor.

The protein resides in the cytoplasm. The catalysed reaction is RNA(n+1) + phosphate = RNA(n) + a ribonucleoside 5'-diphosphate. Involved in mRNA degradation. Catalyzes the phosphorolysis of single-stranded polyribonucleotides processively in the 3'- to 5'-direction. This chain is Polyribonucleotide nucleotidyltransferase, found in Salmonella choleraesuis (strain SC-B67).